Consider the following 438-residue polypeptide: Protein kinase PINOID (438 aa).

The tract at residues 1–24 (MLRESDGEMSLGTTNSPISSGTES) is disordered. The span at 11–24 (LGTTNSPISSGTES) shows a compositional bias: polar residues. The Protein kinase domain occupies 75–394 (FRLMRRIGAG…AAEVKVHPFF (320 aa)). ATP contacts are provided by residues 81–89 (IGAGDIGTV) and K109. D205 acts as the Proton acceptor in catalysis. The 44-residue stretch at 395–438 (KGLNFALIRTLTPPEIPSSVVKKPMKSATFSGRSSNKPAAFDYF) folds into the AGC-kinase C-terminal domain.

This sequence belongs to the protein kinase superfamily. Ser/Thr protein kinase family. In terms of assembly, interacts with PDK1, CML12 and PBP1. Component of a complex made of PINs (e.g. PIN1 and PIN2), MAB4/MELs (e.g. NPY1/MAB4 and NPY5/MEL1) and AGC kinases (e.g. D6PK and PID) at the plasma membrane. Binds directly to PIN2, NPY1/MAB4 and NPY5/MEL1. In terms of processing, autophosphorylated. Phosphorylated by PDK1. As to expression, expressed in root hair cells, shoot xylem parenchyma cells and endodermis around the vasculature. Expressed in anther primordia, vasculature of the growing flower stalk, young pedicels and bracts and developing sepals, but not in petals. In pistils, transiently expressed in the vasculature of the style and the septum, and in the integuments and funiculus of the developing ovule.

It localises to the cytoplasm. The protein localises to the cytosol. It is found in the cell membrane. The enzyme catalyses L-seryl-[protein] + ATP = O-phospho-L-seryl-[protein] + ADP + H(+). It carries out the reaction L-threonyl-[protein] + ATP = O-phospho-L-threonyl-[protein] + ADP + H(+). Activated by magnesium and PDK1. Inhibited by staurosporine. Repressed by calcium. In terms of biological role, serine/threonine-protein kinase involved in the regulation of auxin signaling. Acts as a positive regulator of cellular auxin efflux and regulates organ development by enhancing polar auxin transport. Phosphorylates conserved serine residues in the PIN auxin efflux carriers. Phosphorylation of PIN proteins is required and sufficient for apical-basal PIN polarity that enables directional intercellular auxin fluxes, which mediate differential growth, tissue patterning and organogenesis. Phosphorylates PIN proteins (e.g. PIN1 and PIN2), especially when NPY proteins (e.g. NPY1/MAB4 and NPY5/MEL1) are recruited at the plasma membrane; this enhances the polarized localizations (apical or basal) of PINs in the cell by limiting their lateral diffusion-based escape. Acts in association with PIN1 to control the establishment of bilateral symmetry and promotion of cotyledon outgrowth. Regulates root gravitropism through modulation of PIN2-dependent basipetal auxin transport. Required for polarization of PIN3-dependent auxin transport for hypocotyl gravitropic response. The protein kinase activity of PID is essential for its auxin efflux regulatory function. PID kinase and PP2A phosphatase activities antagonistically regulate phosphorylation of PIN proteins, affecting PIN sorting. In Arabidopsis thaliana (Mouse-ear cress), this protein is Protein kinase PINOID.